The primary structure comprises 436 residues: 3-ketoacyl-CoA thiolase (436 aa).

Residue Cys99 is the Acyl-thioester intermediate of the active site. Active-site proton acceptor residues include His392 and Cys422.

The protein belongs to the thiolase-like superfamily. Thiolase family. As to quaternary structure, heterotetramer of two alpha chains (FadJ) and two beta chains (FadI).

It localises to the cytoplasm. It carries out the reaction an acyl-CoA + acetyl-CoA = a 3-oxoacyl-CoA + CoA. Its pathway is lipid metabolism; fatty acid beta-oxidation. Its function is as follows. Catalyzes the final step of fatty acid oxidation in which acetyl-CoA is released and the CoA ester of a fatty acid two carbons shorter is formed. This Yersinia enterocolitica serotype O:8 / biotype 1B (strain NCTC 13174 / 8081) protein is 3-ketoacyl-CoA thiolase.